The chain runs to 54 residues: Ovomucoid (54 aa).

The region spanning Val-4–Cys-54 is the Kazal-like domain. Cystine bridges form between Cys-6–Cys-36, Cys-14–Cys-33, and Cys-22–Cys-54. Residue Asn-43 is glycosylated (N-linked (GlcNAc...) asparagine).

The protein localises to the secreted. The polypeptide is Ovomucoid (Casuarius casuarius (Southern cassowary)).